The chain runs to 597 residues: Aspartate--tRNA ligase (597 aa).

Residue Glu171 participates in L-aspartate binding. Positions Gln195 to Lys198 are aspartate. Residue Arg217 coordinates L-aspartate. ATP contacts are provided by residues Arg217–Glu219 and Gln226. An L-aspartate-binding site is contributed by His448. Position 482 (Glu482) interacts with ATP. L-aspartate is bound at residue Arg489. Gly534 to Arg537 serves as a coordination point for ATP.

Belongs to the class-II aminoacyl-tRNA synthetase family. Type 1 subfamily. Homodimer.

It localises to the cytoplasm. It carries out the reaction tRNA(Asp) + L-aspartate + ATP = L-aspartyl-tRNA(Asp) + AMP + diphosphate. In terms of biological role, catalyzes the attachment of L-aspartate to tRNA(Asp) in a two-step reaction: L-aspartate is first activated by ATP to form Asp-AMP and then transferred to the acceptor end of tRNA(Asp). This is Aspartate--tRNA ligase from Photobacterium profundum (strain SS9).